We begin with the raw amino-acid sequence, 337 residues long: Inositol 2-dehydrogenase 1 (337 aa).

Belongs to the Gfo/Idh/MocA family. In terms of assembly, homotetramer.

The catalysed reaction is myo-inositol + NAD(+) = scyllo-inosose + NADH + H(+). In terms of biological role, involved in the oxidation of myo-inositol (MI) to 2-keto-myo-inositol (2KMI or 2-inosose). The protein is Inositol 2-dehydrogenase 1 of Paenarthrobacter aurescens (strain TC1).